We begin with the raw amino-acid sequence, 444 residues long: Cell wall mannoprotein PST1 (444 aa).

A signal peptide spans 1–19; sequence MQLHSLIASTALLITSALA. Asn57, Asn76, Asn83, Asn86, Asn196, Asn210, Asn228, Asn235, Asn242, Asn263, Asn268, Asn280, Asn292, Asn305, and Asn329 each carry an N-linked (GlcNAc...) asparagine glycan. Low complexity-rich tracts occupy residues 359 to 381 and 395 to 417; these read SVKL…SKSS and KAAA…KSSK. The segment at 359–418 is disordered; sequence SVKLSSTSKSQSSQTTAKVSKSSSKAEEKKFTSGDIKAAASASSVSSSSASSSSSKSSKG. Asn419 carries GPI-anchor amidated asparagine lipidation. Positions 420–444 are cleaved as a propeptide — removed in mature form; that stretch reads AAIMAPIGQTTPLVGLLTAIIMSIM.

The protein belongs to the SPS2 family. In terms of processing, extensively N- and O-mannosylated.

The protein localises to the cell membrane. It is found in the secreted. It localises to the cell wall. Its function is as follows. Has a partially redundant function to ECM33 in cell wall integrity. May be involved in a repair mechanism activated in response to cell wall damage. This Saccharomyces cerevisiae (strain YJM789) (Baker's yeast) protein is Cell wall mannoprotein PST1 (PST1).